Here is a 250-residue protein sequence, read N- to C-terminus: 1-acyl-sn-glycerol-3-phosphate acyltransferase (250 aa).

The HXXXXD motif motif lies at 88–93 (HIAAMD).

The protein belongs to the 1-acyl-sn-glycerol-3-phosphate acyltransferase family.

The enzyme catalyses a 1-acyl-sn-glycero-3-phosphate + an acyl-CoA = a 1,2-diacyl-sn-glycero-3-phosphate + CoA. It functions in the pathway phospholipid metabolism; CDP-diacylglycerol biosynthesis; CDP-diacylglycerol from sn-glycerol 3-phosphate: step 2/3. In terms of biological role, converts lysophosphatidic acid (LPA) into phosphatidic acid by incorporating acyl moiety at the 2 position. The chain is 1-acyl-sn-glycerol-3-phosphate acyltransferase (plsC) from Borreliella burgdorferi (strain ATCC 35210 / DSM 4680 / CIP 102532 / B31) (Borrelia burgdorferi).